We begin with the raw amino-acid sequence, 491 residues long: Probable glycine dehydrogenase (decarboxylating) subunit 2 (491 aa).

K273 carries the post-translational modification N6-(pyridoxal phosphate)lysine.

Belongs to the GcvP family. C-terminal subunit subfamily. As to quaternary structure, the glycine cleavage system is composed of four proteins: P, T, L and H. In this organism, the P 'protein' is a heterodimer of two subunits. The cofactor is pyridoxal 5'-phosphate.

It carries out the reaction N(6)-[(R)-lipoyl]-L-lysyl-[glycine-cleavage complex H protein] + glycine + H(+) = N(6)-[(R)-S(8)-aminomethyldihydrolipoyl]-L-lysyl-[glycine-cleavage complex H protein] + CO2. The glycine cleavage system catalyzes the degradation of glycine. The P protein binds the alpha-amino group of glycine through its pyridoxal phosphate cofactor; CO(2) is released and the remaining methylamine moiety is then transferred to the lipoamide cofactor of the H protein. This chain is Probable glycine dehydrogenase (decarboxylating) subunit 2, found in Bacillus cytotoxicus (strain DSM 22905 / CIP 110041 / 391-98 / NVH 391-98).